The following is a 129-amino-acid chain: Capsid protein (129 aa).

Residues 31-104 (EWISSNSRSQ…FATNSDCELI (74 aa)) form a viral RNA-binding region.

This sequence belongs to the Leviviricetes capsid protein family. Homodimer. The capsid proteins form dimers that assemble by group of 5. Twelve such pentamers are linked together with free dimers. The homodimers binds to the viral RNA via an operator hairpin, but also to many other RNA sequences in the viral genome; this interaction probably shifts the virus from the replicative to the assembly phase and ensures specific encapsidation of the viral genome.

It is found in the virion. Functionally, capsid protein self-assembles to form an icosahedral capsid with a T=3 symmetry, about 26 nm in diameter, and consisting of 89 capsid proteins dimers (178 capsid proteins). Involved in viral genome encapsidation through the interaction between a capsid protein dimer and the multiple packaging signals present in the RNA genome. The capsid also contains 1 copy of the A2 maturation protein. Acts as a translational repressor of viral replicase synthesis late in infection. This latter function is the result of capsid protein interaction with an RNA hairpin which contains the replicase ribosome-binding site. This chain is Capsid protein, found in Escherichia coli (Bacteriophage R17).